The chain runs to 262 residues: uncharacterized protein (262 aa).

Residues 41–118 are a coiled coil; sequence ELQKNEKIDK…EEKAEDFINK (78 aa).

This is an uncharacterized protein from Plasmodium falciparum (isolate 3D7).